A 176-amino-acid polypeptide reads, in one-letter code: MATATDRAPHQVQVHTPTTQRVDVPRRGYDVSGGGIKTLLPERGPSTSQIIAVLVGVPTGGTLLLLSGLSLLGTIIGLAIATPVFTFFSPVIVPAVVTIGLAVTGILTAGACGLTGLMSLSWMINFIRQVHGTTVPDQLDSVKRRMADMADYVGQKTKDAGQQIQTKAQDVKRSSS.

Residue A2 is modified to N-acetylalanine; alternate. A run of 2 helical transmembrane segments spans residues 50-80 (IIAVLVGVPTGGTLLLLSGLSLLGTIIGLAI) and 95-117 (AVVTIGLAVTGILTAGACGLTGL). The tract at residues 157–176 (TKDAGQQIQTKAQDVKRSSS) is disordered.

This sequence belongs to the oleosin family. Homodimer. Forms oligomers. Expressed in seeds (at protein level). Not expressed in leaves.

The protein localises to the lipid droplet. The protein resides in the membrane. Its function is as follows. May have a structural role to stabilize the lipid body during desiccation of the seed by preventing coalescence of the oil. Probably interacts with both lipid and phospholipid moieties of lipid bodies. May also provide recognition signals for specific lipase anchorage in lipolysis during seedling growth. The chain is Oleosin Ara h 14.0101 from Arachis hypogaea (Peanut).